The following is a 265-amino-acid chain: uncharacterized protein (265 aa).

The protein localises to the mitochondrion. This is an uncharacterized protein from Paramecium tetraurelia.